Reading from the N-terminus, the 360-residue chain is UDP-N-acetylglucosamine--N-acetylmuramyl-(pentapeptide) pyrophosphoryl-undecaprenol N-acetylglucosamine transferase (360 aa).

Residues serine 198 and glutamine 289 each contribute to the UDP-N-acetyl-alpha-D-glucosamine site.

The protein belongs to the glycosyltransferase 28 family. MurG subfamily.

The protein resides in the cell membrane. It catalyses the reaction Mur2Ac(oyl-L-Ala-gamma-D-Glu-L-Lys-D-Ala-D-Ala)-di-trans,octa-cis-undecaprenyl diphosphate + UDP-N-acetyl-alpha-D-glucosamine = beta-D-GlcNAc-(1-&gt;4)-Mur2Ac(oyl-L-Ala-gamma-D-Glu-L-Lys-D-Ala-D-Ala)-di-trans,octa-cis-undecaprenyl diphosphate + UDP + H(+). The protein operates within cell wall biogenesis; peptidoglycan biosynthesis. Functionally, cell wall formation. Catalyzes the transfer of a GlcNAc subunit on undecaprenyl-pyrophosphoryl-MurNAc-pentapeptide (lipid intermediate I) to form undecaprenyl-pyrophosphoryl-MurNAc-(pentapeptide)GlcNAc (lipid intermediate II). The sequence is that of UDP-N-acetylglucosamine--N-acetylmuramyl-(pentapeptide) pyrophosphoryl-undecaprenol N-acetylglucosamine transferase from Streptococcus pyogenes serotype M12 (strain MGAS2096).